The following is a 197-amino-acid chain: Protein FAM219B (197 aa).

2 disordered regions span residues 1-77 and 117-142; these read MATE…HRDH and DENLVSLDSDSDGELESRYSSGYSSA. S14, S125, and S127 each carry phosphoserine.

This sequence belongs to the FAM219 family.

The protein is Protein FAM219B (Fam219b) of Mus musculus (Mouse).